We begin with the raw amino-acid sequence, 1079 residues long: Electrogenic sodium bicarbonate cotransporter 1 (1079 aa).

The required for interaction with AHCYL1 stretch occupies residues 1–62 (MEDEAVLDRG…EKKEKERISE (62 aa)). The Cytoplasmic segment spans residues 1–466 (MEDEAVLDRG…FASDFYDALN (466 aa)). Residue Glu-2 is modified to Phosphoserine. Tyr-30 bears the Phosphotyrosine mark. Basic residues predominate over residues 39–52 (YRRRRRHKRKAGHK). Residues 39–78 (YRRRRRHKRKAGHKEKKEKERISENYSDKSDVENADESSS) form a disordered region. Residues 53–70 (EKKEKERISENYSDKSDV) are compositionally biased toward basic and acidic residues. Residues Ser-61, Ser-65, Ser-68, Ser-223, Ser-232, Ser-233, and Ser-245 each carry the phosphoserine modification. The disordered stretch occupies residues 235 to 266 (SRMFSNPDNGSPAMTHRNLTSSSLNDISDKPE). A phosphothreonine mark is found at Thr-249 and Thr-254. Polar residues predominate over residues 251–260 (RNLTSSSLND). Phosphoserine occurs at positions 256, 257, and 262. The helical transmembrane segment at 467-491 (IQALSAILFIYLATVTNAITFGGLL) threads the bilayer. The Extracellular portion of the chain corresponds to 492-501 (GDATDNMQGV). The helical transmembrane segment at 502-520 (LESFLGTAVSGAIFCLFAG) threads the bilayer. A topological domain (cytoplasmic) is located at residue Gln-521. Residues 522–542 (PLTILSSTGPVLVFERLLFNF) traverse the membrane as a discontinuously helical segment. Residues 543–550 (SKDHSFDY) lie on the Extracellular side of the membrane. A helical membrane pass occupies residues 551 to 571 (LEFRLWIGLWSAFMCLILVAT). Over 572–585 (DASFLVQYFTRFTE) the chain is Cytoplasmic. The chain crosses the membrane as a helical span at residues 586–609 (EGFSSLISFIFIYDAFKKMIKLAD). Residues Ile-597 and Phe-617 are each glycosylated (N-linked (GlcNAc) asparagine). Over 610–692 (YYPINSDFRV…GNNCDFVPDI (83 aa)) the chain is Extracellular. The helical transmembrane segment at 693–710 (TLMSFILFLGTYTSSMAM) threads the bilayer. Topologically, residues 711–725 (KKFKTSRYFPTTARK) are cytoplasmic. Residues 726–745 (LISDFAIILSILIFCVIDAL) form a helical membrane-spanning segment. At 746-779 (VGVDTPKLIVPSEFKPTSPHRGWFVPPFGGNPWW) the chain is on the extracellular side. The segment at 748–779 (VDTPKLIVPSEFKPTSPHRGWFVPPFGGNPWW) is interaction with CA4. The helical transmembrane segment at 780-807 (VCLAAAIPALLVTILIFMDQQITAVIVN) threads the bilayer. Topologically, residues 808–819 (RKEHKLKKGAGY) are cytoplasmic. Residues 820-836 (HLDLFWVAILMVVCSFM) form a helical membrane-spanning segment. Ala-837 is a topological domain (extracellular). The chain crosses the membrane as a discontinuously helical span at residues 838 to 855 (LPWYVAATVISIAHIDSL). Topologically, residues 856 to 877 (KMETETSAPGEQPKFLGVREQR) are cytoplasmic. The chain crosses the membrane as a helical span at residues 878 to 894 (VTGTLVFILTGLSVFMA). Topologically, residues 895–901 (PILKFIP) are extracellular. Residues 902-918 (MPVLYGVFLYMGVASLN) traverse the membrane as a helical segment. Residues 919–960 (GVQFMDRLKLLLMPLKHQPDFIYLRHVPLRRVHLFTSLQVLC) are Cytoplasmic-facing. Positions 961 to 986 (LALLWILKSTVAAIIFPVMILALVAV) form an intramembrane region, discontinuously helical. Residues 987–1079 (RKGMDYLFSQ…STFLERHTSC (93 aa)) lie on the Cytoplasmic side of the membrane. The interval 1002 to 1004 (LDD) is CA2-binding. Residues 1012-1079 (KKKEDEKKKK…STFLERHTSC (68 aa)) form a disordered region. 2 positions are modified to phosphoserine: Ser-1026 and Ser-1029. Residue Ser-1026 is modified to Phosphoserine; by PKA. The interval 1030–1033 (DNDD) is CA2-binding. Residues Ser-1034 and Ser-1044 each carry the phosphoserine modification. Positions 1057 to 1059 (FLS) are required for basolateral targeting. A phosphoserine mark is found at Asp-1060, Leu-1064, Ser-1069, and Ser-1078. Basic and acidic residues predominate over residues 1062-1079 (KPLDRERSSTFLERHTSC).

This sequence belongs to the anion exchanger (TC 2.A.31) family. As to quaternary structure, homodimer. Interacts with CA2/carbonic anhydrase 2 and CA4/carbonic anhydrase 4 which may regulate transporter activity. Isoform 1 but not isoform 2 interacts with AHCYL1 (via PEST domain when phosphorylated); the interaction increases SLC4A4 isoform 1 activity. Interacts with AHCYL2. Phosphorylation of Ser-1026 by PKA increases the binding of CA2 and changes the Na(+):HCO3(-) stoichiometry of the transporter from 3:1 to 2:1. Phosphorylated in presence of STK39 and dephosphorylated in presence of PP1 phosphatase; phosphorylation seems to inhibit SLC4A4 activity. In terms of processing, N-glycosylation is not necessary for the transporter basic functions. As to expression, specifically expressed in kidney and to a lower extent in liver, lung, spleen, brain, skeletal muscle and heart. In kidney, expressed in proximal tubules at the corticomedullary junction. Isoform 2 is specifically expressed in kidney. Isoform 1 is expressed in kidney and pancreas while isoform 3 is specifically expressed in brain (at protein level). In brain, isoform 1 is expressed in astrocytes while isoform 3 is expressed in neurons (at protein level). In the eye, isoform 1 is expressed in cornea, conjunctiva, lens epithelium, ciliary bodies and retina while isoform 2 is detected only in the conjunctiva.

Its subcellular location is the basolateral cell membrane. It localises to the cell membrane. The enzyme catalyses 2 hydrogencarbonate(out) + Na(+)(out) = 2 hydrogencarbonate(in) + Na(+)(in). The catalysed reaction is 3 hydrogencarbonate(out) + Na(+)(out) = 3 hydrogencarbonate(in) + Na(+)(in). With respect to regulation, inhibited by 4,4'-diisothiocyanatostilbene-2,2'-disulfonic acid (DIDS). Functionally, electrogenic sodium/bicarbonate cotransporter with a Na(+):HCO3(-) stoichiometry varying from 1:2 to 1:3. May regulate bicarbonate influx/efflux at the basolateral membrane of cells and regulate intracellular pH. The protein is Electrogenic sodium bicarbonate cotransporter 1 (Slc4a4) of Rattus norvegicus (Rat).